The chain runs to 180 residues: MASSIVSSAAVATRGNGAQASMVAPFTGLKSTASFPVSRKQNLDITSIASNGGRVSCMQVWPPINMKKYETLSYLPDLSDEQLLSEIEYLLKNGWVPCLEFETEHGFVYRENHKSPGYYDGRYWTMWKLPMFGCTDATQVLAEVQEAKKAYPQAWVRIIGFDNVRQVQCISFIAYKPEGY.

A chloroplast-targeting transit peptide spans 1-56; it reads MASSIVSSAAVATRGNGAQASMVAPFTGLKSTASFPVSRKQNLDITSIASNGGRVS.

It belongs to the RuBisCO small chain family. In terms of assembly, heterohexadecamer of 8 large and 8 small subunits. (Microbial infection) Binds to tobamovirus movement protein; this interaction seems required for viral systemic movement.

Its subcellular location is the plastid. The protein resides in the chloroplast. It is found in the cell junction. It localises to the plasmodesma. RuBisCO catalyzes two reactions: the carboxylation of D-ribulose 1,5-bisphosphate, the primary event in carbon dioxide fixation, as well as the oxidative fragmentation of the pentose substrate. Both reactions occur simultaneously and in competition at the same active site. Although the small subunit is not catalytic it is essential for maximal activity. Involved in antiviral defenses. This is Ribulose bisphosphate carboxylase small subunit, chloroplastic 4 from Solanum lycopersicum (Tomato).